The chain runs to 454 residues: Mediator of RNA polymerase II transcription subunit 1 (454 aa).

The protein belongs to the Mediator complex subunit 1 family. As to quaternary structure, component of the Mediator complex.

The protein resides in the nucleus. Component of the Mediator complex, a coactivator involved in the regulated transcription of nearly all RNA polymerase II-dependent genes. Mediator functions as a bridge to convey information from gene-specific regulatory proteins to the basal RNA polymerase II transcription machinery. Mediator is recruited to promoters by direct interactions with regulatory proteins and serves as a scaffold for the assembly of a functional preinitiation complex with RNA polymerase II and the general transcription factors. This chain is Mediator of RNA polymerase II transcription subunit 1 (med1), found in Schizosaccharomyces pombe (strain 972 / ATCC 24843) (Fission yeast).